A 1097-amino-acid polypeptide reads, in one-letter code: DNA-directed RNA polymerase subunit beta (1097 aa).

The disordered stretch occupies residues glutamine 1072–aspartate 1097. Residues arginine 1077–threonine 1091 show a composition bias toward polar residues.

The protein belongs to the RNA polymerase beta chain family. In cyanobacteria the RNAP catalytic core is composed of 2 alpha, 1 beta, 1 beta', 1 gamma and 1 omega subunit. When a sigma factor is associated with the core the holoenzyme is formed, which can initiate transcription.

It catalyses the reaction RNA(n) + a ribonucleoside 5'-triphosphate = RNA(n+1) + diphosphate. In terms of biological role, DNA-dependent RNA polymerase catalyzes the transcription of DNA into RNA using the four ribonucleoside triphosphates as substrates. The polypeptide is DNA-directed RNA polymerase subunit beta (Prochlorococcus marinus (strain AS9601)).